The chain runs to 186 residues: Mitoferrin-2B (186 aa).

The stretch at 75-163 (SNVTAHMLAG…FACYEKLKKT (89 aa)) is one Solcar repeat. A run of 3 helical transmembrane segments spans residues 77 to 96 (VTAH…CLMY), 137 to 157 (RGLN…FACY), and 172 to 185 (GNCH…NSCP).

Belongs to the mitochondrial carrier (TC 2.A.29) family.

It is found in the mitochondrion inner membrane. It catalyses the reaction Fe(2+)(in) = Fe(2+)(out). Functionally, mitochondrial iron transporter that mediates iron uptake. Probably required for heme synthesis of hemoproteins and Fe-S cluster assembly in non-erythroid cells. This chain is Mitoferrin-2B (slc25a28-b), found in Xenopus laevis (African clawed frog).